The primary structure comprises 36 residues: Pancreatic polypeptide (36 aa).

Residue phenylalanine 36 is modified to Phenylalanine amide.

This sequence belongs to the NPY family.

Its subcellular location is the secreted. Hormone secreted by pancreatic cells that acts as a regulator of pancreatic and gastrointestinal functions. The chain is Pancreatic polypeptide (ppy) from Aquarana catesbeiana (American bullfrog).